A 175-amino-acid chain; its full sequence is Ribosome maturation factor RimM (175 aa).

The PRC barrel domain maps to 96 to 175 (EEDFYWRDLI…LIQVNWEPDF (80 aa)).

This sequence belongs to the RimM family. In terms of assembly, binds ribosomal protein uS19.

The protein resides in the cytoplasm. Its function is as follows. An accessory protein needed during the final step in the assembly of 30S ribosomal subunit, possibly for assembly of the head region. Essential for efficient processing of 16S rRNA. May be needed both before and after RbfA during the maturation of 16S rRNA. It has affinity for free ribosomal 30S subunits but not for 70S ribosomes. The polypeptide is Ribosome maturation factor RimM (Psychromonas ingrahamii (strain DSM 17664 / CCUG 51855 / 37)).